Consider the following 1142-residue polypeptide: SNF1-activating kinase 1 (1142 aa).

Positions 22-41 (ELEKSGTSSSVSLRSPTKSS) are disordered. Thr-43 carries the post-translational modification Phosphothreonine. A compositionally biased stretch (polar residues) spans 82–93 (QHQQHISSSLAK). Positions 82 to 107 (QHQQHISSSLAKTPTTTSSFCSSGSS) are disordered. Residues 94-107 (TPTTTSSFCSSGSS) are compositionally biased toward low complexity. In terms of domain architecture, Protein kinase spans 133 to 448 (YEIIKELGHG…IPAIKKHPFV (316 aa)). Residues 139-147 (LGHGQHGKV) and Lys-162 contribute to the ATP site. The Proton acceptor role is filled by Asp-277. Disordered stretches follow at residues 634–678 (SPEA…VLPQ), 694–799 (NSLL…NSPI), 825–875 (SHFN…AYSE), 919–971 (KSSL…QKGS), 1005–1027 (SQPI…KATT), and 1066–1142 (STNA…SALP). Over residues 640–656 (SVSSVPNLPSAPSSTRL) the composition is skewed to polar residues. Over residues 694 to 706 (NSLLRNSSSHLTS) the composition is skewed to low complexity. Residues 707 to 741 (YNSGRPSSRTGRMNSRNQNLPKIPNSLSKISTTKL) are compositionally biased toward polar residues. The span at 742-751 (TELRVPKDSE) shows a compositional bias: basic and acidic residues. The span at 785-799 (NINSSDKSGSKNSPI) shows a compositional bias: polar residues. 2 stretches are compositionally biased toward low complexity: residues 835-868 (SSQS…RNSS) and 920-936 (SSLN…SSSS). Over residues 958 to 971 (SKLSELSNSPQKGS) the composition is skewed to polar residues. Ser-964 is modified (phosphoserine). Basic and acidic residues predominate over residues 1096–1111 (NDEHARNTSCHGDKGQ). Phosphoserine is present on Ser-1126. Residues 1133-1142 (NEEKRRSALP) show a composition bias toward basic and acidic residues.

The protein belongs to the protein kinase superfamily. Ser/Thr protein kinase family. Associates with the SNF1 kinase complex. Interacts with SNF1 and REG1. Autophosphorylated.

It localises to the cytoplasm. The enzyme catalyses L-seryl-[protein] + ATP = O-phospho-L-seryl-[protein] + ADP + H(+). It carries out the reaction L-threonyl-[protein] + ATP = O-phospho-L-threonyl-[protein] + ADP + H(+). Functionally, serine/threonine-protein kinase that phosphorylates SNF1, the catalytic subunit of the SNF1 kinase complex. Acts as an activator of the SNF1 kinase complex and controls its nuclear localization upon glucose and nitrogen depletion. Also required for SNF1 kinase activation under other stress conditions like alkaline pH or presence of cadmium. This Saccharomyces cerevisiae (strain ATCC 204508 / S288c) (Baker's yeast) protein is SNF1-activating kinase 1 (SAK1).